The following is a 325-amino-acid chain: Glutarate 2-hydroxylase (325 aa).

Fe cation-binding residues include His-160, Asp-162, and His-292.

The protein belongs to the glutarate hydroxylase family. As to quaternary structure, homotetramer. The cofactor is Fe(2+).

The catalysed reaction is glutarate + 2-oxoglutarate + O2 = (S)-2-hydroxyglutarate + succinate + CO2. The protein operates within amino-acid degradation. In terms of biological role, acts as an alpha-ketoglutarate-dependent dioxygenase catalyzing hydroxylation of glutarate (GA) to L-2-hydroxyglutarate (L2HG). Functions in a L-lysine degradation pathway that proceeds via cadaverine, glutarate and L-2-hydroxyglutarate. This Escherichia coli O6:H1 (strain CFT073 / ATCC 700928 / UPEC) protein is Glutarate 2-hydroxylase.